A 359-amino-acid chain; its full sequence is Palmitoyltransferase ERF2 (359 aa).

The interval 1-21 (MALVSRRSTRSESTSITKEEH) is disordered. At 1-75 (MALVSRRSTR…RFRTVKGAKP (75 aa)) the chain is on the cytoplasmic side. The chain crosses the membrane as a helical span at residues 76 to 96 (LWLGVLLAIVCPMVLFSIFEA). Over 97–104 (HKLWHTQN) the chain is Lumenal. A helical transmembrane segment spans residues 105 to 125 (GYKVLVIFFYYFWVITLASFI). Residues 126 to 217 (RTATSDPGVL…NCIGKRNYRF (92 aa)) lie on the Cytoplasmic side of the membrane. Residues 173–223 (KYCPSCRIWRPPRSSHCSTCNVCVMVHDHHCIWVNNCIGKRNYRFFLIFLL) enclose the DHHC domain. Residue cysteine 203 is the S-palmitoyl cysteine intermediate of the active site. Residues 218–238 (FLIFLLGAILSSVILLTNCAI) form a helical membrane-spanning segment. Residues 239 to 250 (HIARESGGPRDC) are Lumenal-facing. Residues 251-271 (PVAILLLCYAGLTLWYPAILF) traverse the membrane as a helical segment. Residues 272–359 (TYHIFMAGNQ…AHSFEKIQKI (88 aa)) are Cytoplasmic-facing.

It belongs to the DHHC palmitoyltransferase family. ERF2/ZDHHC9 subfamily. Interacts with SHR5. Autopalmitoylated.

It is found in the endoplasmic reticulum membrane. It catalyses the reaction L-cysteinyl-[protein] + hexadecanoyl-CoA = S-hexadecanoyl-L-cysteinyl-[protein] + CoA. The ERF2-SHR5 complex is a palmitoyltransferase specific for Ras proteins. Palmitoylates RAS2, which is required for its proper plasma membrane localization. In Saccharomyces cerevisiae (strain ATCC 204508 / S288c) (Baker's yeast), this protein is Palmitoyltransferase ERF2 (ERF2).